The chain runs to 596 residues: Signal peptide peptidase-like 2B (596 aa).

The first 21 residues, 1–21 (MAARWAQFLLFSLLSLPQVYC), serve as a signal peptide directing secretion. Over 22 to 170 (EYGMVHVLSE…APNEPVLDYN (149 aa)) the chain is Lumenal. A PA domain is found at 53 to 147 (HDLGKASLLQ…LLSYSDMLDI (95 aa)). Asparagine 93 carries N-linked (GlcNAc...) asparagine glycosylation. Residues 171–191 (MVIIFVMAVGTVAIGGYWAGS) traverse the membrane as a helical segment. Over 192-219 (RDVKERYMKHKRDDGAEKHEDETVDVTP) the chain is Cytoplasmic. A helical transmembrane segment spans residues 220–240 (IMICVFVVMCCSMLVLLYFFY). At 241 to 242 (DH) the chain is on the lumenal side. A helical transmembrane segment spans residues 243-263 (LVYVIIGIFCLAASIGLYSCL). Over 264-289 (SPFVRRFPLGKCRIPDNNLPYFHKRP) the chain is Cytoplasmic. The chain crosses the membrane as a helical span at residues 290 to 310 (QVRILLLAVFCISVSVVWGVF). The Lumenal portion of the chain corresponds to 311-315 (RNEDQ). Residues 316–336 (WAWVLQDALGIAFCLYMLKTI) traverse the membrane as a helical segment. At 337–344 (RLPTFKGC) the chain is on the cytoplasmic side. The chain crosses the membrane as a helical span at residues 345-365 (TLLLLVLFVYDVFFVFITPFL). Aspartate 355 is an active-site residue. Residues 366-408 (TKTGESIMVEVAAGPSDSATHEKLPMVLKVPRLNSSPLALCDR) are Lumenal-facing. A helical transmembrane segment spans residues 409 to 429 (PFSLLGFGDILVPGLLVAYCH). Residue aspartate 417 is part of the active site. Over 430–441 (RFDIQVQSSRVY) the chain is Cytoplasmic. A helical membrane pass occupies residues 442-462 (FVACTIAYGIGLLVTFVALAL). Residues 463–466 (MQMG) are Lumenal-facing. A helical transmembrane segment spans residues 467 to 487 (QPALLYLVPCTLITSFSVALW). A PAL motif is present at residues 468-470 (PAL). Topologically, residues 488–596 (RKELAMFWTG…SLNLEQKQLE (109 aa)) are cytoplasmic. Residues 543-596 (KELHSPTLAAEEPADNDTKTEQSEVSIAQSEEAAGHNKDDLESKSLNLEQKQLE) are disordered. Basic and acidic residues predominate over residues 575–585 (AAGHNKDDLES). The span at 586-596 (KSLNLEQKQLE) shows a compositional bias: polar residues.

The protein belongs to the peptidase A22B family.

Its subcellular location is the cell membrane. It is found in the golgi apparatus membrane. It localises to the lysosome membrane. The protein resides in the endosome membrane. The protein localises to the membrane. Functionally, intramembrane-cleaving aspartic protease (I-CLiP) that cleaves type II membrane signal peptides in the hydrophobic plane of the membrane. This is Signal peptide peptidase-like 2B from Gallus gallus (Chicken).